Consider the following 172-residue polypeptide: MAAPGPRALRAALCGGCCCLLLCAQLVLAGKGARGFGRGALLRLNVWPTTQGGCKHLGHCEHCVDRAHNFSICVWQQCGPEEPGHCVAQAEVVKEGCSIYNHSESCPASHHHSTEEPKPSTTGSPPIPEDHSPGFDGASFIGGIVLVLSLQATAFFVLRFLKAKDSTYQTLI.

An N-terminal signal peptide occupies residues 1-29; it reads MAAPGPRALRAALCGGCCCLLLCAQLVLA. The Extracellular segment spans residues 30-137; sequence GKGARGFGRG…PEDHSPGFDG (108 aa). N-linked (GlcNAc...) asparagine glycosylation is found at N69 and N101. The interval 108 to 132 is disordered; it reads ASHHHSTEEPKPSTTGSPPIPEDHS. Residues 138-158 form a helical membrane-spanning segment; the sequence is ASFIGGIVLVLSLQATAFFVL. Residues 159 to 172 lie on the Cytoplasmic side of the membrane; it reads RFLKAKDSTYQTLI.

The protein belongs to the CD164 family.

It is found in the membrane. The chain is CD164 sialomucin-like 2 protein (Cd164l2) from Mus musculus (Mouse).